Consider the following 281-residue polypeptide: CCAAT/enhancer-binding protein epsilon (281 aa).

The disordered stretch occupies residues 1-30 (MSHGTYYECEPRAGQQPLEFSGARAGPGEL). Residue Lys121 forms a Glycyl lysine isopeptide (Lys-Gly) (interchain with G-Cter in SUMO2) linkage. Ser181 carries the phosphoserine modification. The bZIP domain occupies 204–267 (SLEYRLRRER…DTLRNLFRQI (64 aa)). The basic motif stretch occupies residues 208-228 (RLRRERNNIAVRKSRDKAKRR). The segment at 230–237 (LETQQKVL) is leucine-zipper.

It belongs to the bZIP family. C/EBP subfamily. Binds DNA as a homodimer and as a heterodimer. Can form stable heterodimers with CEBPA, CEBPB and CEBPD. Interacts with GATA1 and SPI1. Interacts with SMARCD2. Post-translationally, phosphorylated.

The protein localises to the nucleus. In terms of biological role, transcriptional activator. C/EBP are DNA-binding proteins that recognize two different motifs: the CCAAT homology common to many promoters and the enhanced core homology common to many enhancers. Required for the promyelocyte-myelocyte transition in myeloid differentiation. This Ovis aries (Sheep) protein is CCAAT/enhancer-binding protein epsilon (CEBPE).